The following is a 382-amino-acid chain: Glutaminyl-peptide cyclotransferase-like protein (382 aa).

A helical transmembrane segment spans residues 35-55; that stretch reads LLPLLLALAVGSAFYTIWSGW. Cys167 and Cys191 are disulfide-bonded. A Zn(2+)-binding site is contributed by Asp186. The Proton acceptor role is filled by Glu225. Glu226 contributes to the Zn(2+) binding site. The active-site Proton acceptor is Asp269. Position 351 (His351) interacts with Zn(2+).

The protein belongs to the glutaminyl-peptide cyclotransferase family.

It localises to the golgi apparatus membrane. It catalyses the reaction N-terminal L-glutaminyl-[peptide] = N-terminal 5-oxo-L-prolyl-[peptide] + NH4(+). Functionally, responsible for the biosynthesis of pyroglutamyl peptides. The polypeptide is Glutaminyl-peptide cyclotransferase-like protein (QPCTL) (Macaca fascicularis (Crab-eating macaque)).